Consider the following 88-residue polypeptide: Large ribosomal subunit protein bL31 (88 aa).

Residues 67–88 (MGSVDNATSEKKSATDETSKES) form a disordered region. Positions 74 to 88 (TSEKKSATDETSKES) are enriched in basic and acidic residues.

Belongs to the bacterial ribosomal protein bL31 family. Type A subfamily. In terms of assembly, part of the 50S ribosomal subunit.

Its function is as follows. Binds the 23S rRNA. The sequence is that of Large ribosomal subunit protein bL31 from Synechococcus sp. (strain CC9311).